The primary structure comprises 150 residues: Geranyl diphosphate phosphohydrolase (150 aa).

A Nudix hydrolase domain is found at 14–147; the sequence is SIKVAVVVCL…DNVVQDGFNP (134 aa). Residues 48–69 carry the Nudix box motif; sequence GHLEFGESFEECAARELKEETD. Residues Glu63 and Glu67 each coordinate Mg(2+).

It belongs to the Nudix hydrolase family. As to expression, expressed in petals. Little or no expression in stamens, sepals or young leaves.

The protein resides in the cytoplasm. The catalysed reaction is (2E)-geranyl diphosphate + H2O = (2E)-geranyl phosphate + phosphate + H(+). Involved in a cytosolic pathway for the biosynthesis of free monoterpene alcohols that contribute to fragrance. Lacks terpene synthase activity, but has a diphosphohydrolase activity with geranyl diphosphate and farnesyl diphosphate as substrates. No activity with 8-oxo-dGTP and dGTP and unable to dephosphorylate geranyl phosphate to geraniol. The polypeptide is Geranyl diphosphate phosphohydrolase (Rosa hybrid cultivar).